The primary structure comprises 658 residues: Integrator complex subunit 9 (658 aa).

2 residues coordinate 1D-myo-inositol hexakisphosphate: lysine 2 and phenylalanine 19. Residue lysine 58 forms a Glycyl lysine isopeptide (Lys-Gly) (interchain with G-Cter in SUMO2) linkage. The 1D-myo-inositol hexakisphosphate site is built by lysine 510 and arginine 511. The tract at residues 548–574 (DNKHLLQPPPRPAQPTSGKKRKRVSDD) is disordered. Residues 566 to 570 (KKRKR) carry the Nuclear localization signal motif.

This sequence belongs to the metallo-beta-lactamase superfamily. RNA-metabolizing metallo-beta-lactamase-like family. INTS9 subfamily. In terms of assembly, component of the Integrator complex, composed of core subunits INTS1, INTS2, INTS3, INTS4, INTS5, INTS6, INTS7, INTS8, INTS9/RC74, INTS10, INTS11/CPSF3L, INTS12, INTS13, INTS14 and INTS15. The core complex associates with protein phosphatase 2A subunits PPP2CA and PPP2R1A, to form the Integrator-PP2A (INTAC) complex. INTS9 is part of the RNA endonuclease subcomplex, composed of INTS4, INTS9, INTS11 and inositol hexakisphosphate (InsP6). Interacts with WDR73; interaction is required for the assembly of the RNA endonuclease subcomplex in the cytoplasm. Interacts with BRAT1; interaction is required for the assembly of the RNA endonuclease subcomplex. Interacts with ESRRB, ESRRB is not a core component of the Integrator complex and this association is a bridge for the interaction with the multiprotein complex Integrator; attracts the transcriptional machinery.

The protein localises to the nucleus. It localises to the cytoplasm. Its function is as follows. Component of the integrator complex, a multiprotein complex that terminates RNA polymerase II (Pol II) transcription in the promoter-proximal region of genes. The integrator complex provides a quality checkpoint during transcription elongation by driving premature transcription termination of transcripts that are unfavorably configured for transcriptional elongation: the complex terminates transcription by (1) catalyzing dephosphorylation of the C-terminal domain (CTD) of Pol II subunit POLR2A/RPB1 and SUPT5H/SPT5, (2) degrading the exiting nascent RNA transcript via endonuclease activity and (3) promoting the release of Pol II from bound DNA. The integrator complex is also involved in terminating the synthesis of non-coding Pol II transcripts, such as enhancer RNAs (eRNAs), small nuclear RNAs (snRNAs), telomerase RNAs and long non-coding RNAs (lncRNAs). Mediates recruitment of cytoplasmic dynein to the nuclear envelope, probably as component of the integrator complex. In Homo sapiens (Human), this protein is Integrator complex subunit 9.